The chain runs to 423 residues: ATP-citrate synthase alpha chain protein 2 (423 aa).

Residues Asn-343, Thr-345, and Arg-376 each coordinate citrate.

The protein belongs to the succinate/malate CoA ligase beta subunit family. In terms of assembly, heterooctamer of 4 alpha and 4 beta chains.

It localises to the cytoplasm. Its subcellular location is the cytosol. It catalyses the reaction oxaloacetate + acetyl-CoA + ADP + phosphate = citrate + ATP + CoA. In terms of biological role, ATP citrate-lyase is the primary enzyme responsible for the synthesis of cytosolic acetyl-CoA, used for the elongation of fatty acids and biosynthesis of isoprenoids, flavonoids and malonated derivatives. May supply substrate to the cytosolic acetyl-CoA carboxylase, which generates the malonyl-CoA used for the synthesis of a multitude of compounds, including very long chain fatty acids and flavonoids. Required for normal growth and development and elongation of C18 fatty acids to C20 to C24 fatty acids in seeds. In contrast to all known animal ACL enzymes having a homomeric structure, plant ACLs are composed of alpha and beta chains. This Arabidopsis thaliana (Mouse-ear cress) protein is ATP-citrate synthase alpha chain protein 2 (ACLA-2).